A 378-amino-acid chain; its full sequence is Probable 3-hydroxyisobutyryl-CoA hydrolase 3 (378 aa).

Substrate-binding residues include Glu-138 and Asp-146.

It belongs to the enoyl-CoA hydratase/isomerase family.

The protein resides in the peroxisome. It catalyses the reaction 3-hydroxy-2-methylpropanoyl-CoA + H2O = 3-hydroxy-2-methylpropanoate + CoA + H(+). Its pathway is amino-acid degradation; L-valine degradation. Functionally, involved in valine catabolism. In Arabidopsis thaliana (Mouse-ear cress), this protein is Probable 3-hydroxyisobutyryl-CoA hydrolase 3.